A 314-amino-acid polypeptide reads, in one-letter code: Epithelial cell adhesion molecule (314 aa).

Residues 1–23 (MAPPQVLAFGLLLAAATAAVAAA) form the signal peptide. Residues 24 to 265 (QQGCVCENYK…PPEFSMQGLQ (242 aa)) are Extracellular-facing. Intrachain disulfides connect C27/C46, C29/C59, C38/C48, C66/C99, C110/C116, and C118/C135. The N-linked (GlcNAc...) asparagine glycan is linked to N37. The Thyroglobulin type-1 domain occupies 63–135 (ASKCLVMKAE…RTDKDSEISC (73 aa)). A glycan (N-linked (GlcNAc...) asparagine) is linked at N111. Residue N198 is glycosylated (N-linked (GlcNAc...) asparagine). A helical membrane pass occupies residues 266 to 288 (AGIIAVIAVVAIAIVAGIIVLIV). Residues 289–314 (STKKRRAKYEKAEIKEMGEMHRELNA) lie on the Cytoplasmic side of the membrane.

Belongs to the EPCAM family. Monomer. Interacts with phosphorylated CLDN7. Post-translationally, glycosylation at Asn-198 is crucial for protein stability.

It is found in the lateral cell membrane. It localises to the cell junction. The protein localises to the tight junction. Its function is as follows. May act as a physical homophilic interaction molecule between intestinal epithelial cells (IECs) and intraepithelial lymphocytes (IELs) at the mucosal epithelium for providing immunological barrier as a first line of defense against mucosal infection. Plays a role in embryonic stem cells proliferation and differentiation. Up-regulates the expression of FABP5, MYC and cyclins A and E. This chain is Epithelial cell adhesion molecule (TACSTD1), found in Sus scrofa (Pig).